The following is a 258-amino-acid chain: Acetylglutamate kinase (258 aa).

Residues 41 to 42 (GG), R63, and N156 each bind substrate.

The protein belongs to the acetylglutamate kinase family. ArgB subfamily.

It is found in the cytoplasm. It carries out the reaction N-acetyl-L-glutamate + ATP = N-acetyl-L-glutamyl 5-phosphate + ADP. It participates in amino-acid biosynthesis; L-arginine biosynthesis; N(2)-acetyl-L-ornithine from L-glutamate: step 2/4. Catalyzes the ATP-dependent phosphorylation of N-acetyl-L-glutamate. The protein is Acetylglutamate kinase of Bacillus amyloliquefaciens (Bacillus velezensis).